A 424-amino-acid chain; its full sequence is Na(+)/H(+) antiporter NhaA (424 aa).

The next 11 membrane-spanning stretches (helical) occupy residues 23–43 (ILLIFAAILAMIVANSPLATL), 65–85 (VHLWINDGLMAVFFLLVGLEI), 102–122 (LPFIAAAAGMAVPAALYMFFV), 131–151 (GWAIPAATDIAFAMGVLALLG), 160–180 (LFLVTVAIVDDMGAVAIIALF), 183–203 (AKINLLALGAAAAILGIMFAC), 211–231 (LLVYMALFLLLWYAMLLSGVH), 265–285 (ALHPTVAFAIVPLFGFANAGV), 303–323 (IAAGLFLGKQIGIFGSVWLAV), 341–361 (AVSMLCGIGFTMSLFIGSLAF), and 373–393 (IGILMGSLASALVGFAVLRLA).

The protein belongs to the NhaA Na(+)/H(+) (TC 2.A.33) antiporter family.

Its subcellular location is the cell inner membrane. The enzyme catalyses Na(+)(in) + 2 H(+)(out) = Na(+)(out) + 2 H(+)(in). In terms of biological role, na(+)/H(+) antiporter that extrudes sodium in exchange for external protons. The polypeptide is Na(+)/H(+) antiporter NhaA (Sphingopyxis alaskensis (strain DSM 13593 / LMG 18877 / RB2256) (Sphingomonas alaskensis)).